Consider the following 148-residue polypeptide: Aspartate carbamoyltransferase regulatory chain (148 aa).

Zn(2+) contacts are provided by Cys106, Cys111, Cys134, and Cys137.

Belongs to the PyrI family. Contains catalytic and regulatory chains. Zn(2+) serves as cofactor.

Involved in allosteric regulation of aspartate carbamoyltransferase. The protein is Aspartate carbamoyltransferase regulatory chain of Methanococcus maripaludis (strain C6 / ATCC BAA-1332).